Reading from the N-terminus, the 85-residue chain is Large ribosomal subunit protein bL27 (85 aa).

Residues 1–21 are disordered; the sequence is MAHKKGQGSTQNNRDSAGRRL.

It belongs to the bacterial ribosomal protein bL27 family.

This Wolinella succinogenes (strain ATCC 29543 / DSM 1740 / CCUG 13145 / JCM 31913 / LMG 7466 / NCTC 11488 / FDC 602W) (Vibrio succinogenes) protein is Large ribosomal subunit protein bL27.